We begin with the raw amino-acid sequence, 299 residues long: Taste receptor type 2 member 5 (299 aa).

Position 1 (methionine 1) is a topological domain, extracellular. Residues 2-22 traverse the membrane as a helical segment; sequence LSAGLGLLMLVAVVEFLIGLI. The Cytoplasmic portion of the chain corresponds to 23–45; the sequence is GNGVLVVWSFREWMRKFNWSSYN. Residues 46 to 66 traverse the membrane as a helical segment; sequence LIILGLAGCRFLLQWLIILDL. Over 67–82 the chain is Extracellular; the sequence is SLFPLFQSSRWLRYLS. Residues 83–103 traverse the membrane as a helical segment; the sequence is IFWVLVSQASLWFATFLSVFY. Topologically, residues 104–127 are cytoplasmic; it reads CKKITTFDRPAYLWLKQRAYNLSL. The helical transmembrane segment at 128-148 threads the bilayer; sequence WCLLGYFIINLLLTVQIGLMF. Residues 149-175 lie on the Extracellular side of the membrane; the sequence is YHPPQGNSSIRYPFESWQYLYAFRLNS. N-linked (GlcNAc...) asparagine glycosylation occurs at asparagine 155. Residues 176–196 traverse the membrane as a helical segment; sequence GSYLPLMVFLVSSGMLIVSLY. The Cytoplasmic segment spans residues 197-223; it reads THHKKMKVHSAGRRDVRAKAHITALKS. A helical transmembrane segment spans residues 224–244; that stretch reads LGCFLFLHLVYIMASPFSITS. The Extracellular portion of the chain corresponds to 245-253; that stretch reads KTYPPDLTS. Residues 254 to 274 form a helical membrane-spanning segment; sequence VFIWETLMAAYPSLHSLILIM. At 275–299 the chain is on the cytoplasmic side; that stretch reads GIPRVKQTCQKILWKTVCARRCWGP.

This sequence belongs to the G-protein coupled receptor T2R family.

The protein localises to the membrane. In terms of biological role, receptor that may play a role in the perception of bitterness and is gustducin-linked. May play a role in sensing the chemical composition of the gastrointestinal content. The activity of this receptor may stimulate alpha gustducin, mediate PLC-beta-2 activation and lead to the gating of TRPM5. In Gorilla gorilla gorilla (Western lowland gorilla), this protein is Taste receptor type 2 member 5 (TAS2R5).